The chain runs to 336 residues: UPF0284 protein Pcal_1534 (336 aa).

It belongs to the UPF0284 family.

This chain is UPF0284 protein Pcal_1534, found in Pyrobaculum calidifontis (strain DSM 21063 / JCM 11548 / VA1).